The chain runs to 400 residues: uncharacterized protein (400 aa).

Belongs to the mimivirus R640 family.

Its subcellular location is the virion. This is an uncharacterized protein from Acanthamoeba polyphaga (Amoeba).